Here is a 492-residue protein sequence, read N- to C-terminus: GTPase Der (492 aa).

EngA-type G domains lie at 3–167 and 188–363; these read PVVA…PAPE and ICIA…AQYA. Residues 9–16, 56–60, 119–122, 194–201, 241–245, and 306–309 contribute to the GTP site; these read GRPNVGKS, DTGGF, NKVE, DTAGI, and NKWD. The 85-residue stretch at 364–448 folds into the KH-like domain; that stretch reads YRINTGLLNR…PIRLLFRAKT (85 aa). The tract at residues 464–492 is disordered; the sequence is VEKKEKKTTRRKKERKEQSRRKRVRDLKG. The segment covering 469 to 492 has biased composition (basic residues); sequence KKTTRRKKERKEQSRRKRVRDLKG.

Belongs to the TRAFAC class TrmE-Era-EngA-EngB-Septin-like GTPase superfamily. EngA (Der) GTPase family. In terms of assembly, associates with the 50S ribosomal subunit.

In terms of biological role, GTPase that plays an essential role in the late steps of ribosome biogenesis. This is GTPase Der from Desulforapulum autotrophicum (strain ATCC 43914 / DSM 3382 / VKM B-1955 / HRM2) (Desulfobacterium autotrophicum).